We begin with the raw amino-acid sequence, 241 residues long: ATP synthase subunit a (241 aa).

Transmembrane regions (helical) follow at residues 30 to 50 (GQVF…ISLG), 91 to 111 (FIGT…LIPW), 128 to 148 (INTT…AGLS), 193 to 213 (LVVG…VMFL), and 214 to 234 (GLFT…YYIG).

It belongs to the ATPase A chain family. F-type ATPases have 2 components, CF(1) - the catalytic core - and CF(0) - the membrane proton channel. CF(1) has five subunits: alpha(3), beta(3), gamma(1), delta(1), epsilon(1). CF(0) has four main subunits: a, b, b' and c.

The protein resides in the cellular thylakoid membrane. Key component of the proton channel; it plays a direct role in the translocation of protons across the membrane. This is ATP synthase subunit a from Prochlorococcus marinus (strain MIT 9215).